The sequence spans 451 residues: Alpha-galactosidase (451 aa).

NAD(+) is bound at residue 5–71 (PKITFIGAGS…ASGKITCHTQ (67 aa)). N151 lines the substrate pocket. C173 is a Mn(2+) binding site. The active-site Proton donor is the H174. H203 contacts Mn(2+). Residue R287 participates in substrate binding.

Belongs to the glycosyl hydrolase 4 family. In terms of assembly, homodimer. NAD(+) is required as a cofactor. It depends on Mn(2+) as a cofactor.

The enzyme catalyses Hydrolysis of terminal, non-reducing alpha-D-galactose residues in alpha-D-galactosides, including galactose oligosaccharides, galactomannans and galactolipids.. The chain is Alpha-galactosidase (melA) from Escherichia coli (strain K12).